A 100-amino-acid chain; its full sequence is Urease subunit gamma (100 aa).

Belongs to the urease gamma subunit family. In terms of assembly, heterotrimer of UreA (gamma), UreB (beta) and UreC (alpha) subunits. Three heterotrimers associate to form the active enzyme.

It localises to the cytoplasm. The catalysed reaction is urea + 2 H2O + H(+) = hydrogencarbonate + 2 NH4(+). Its pathway is nitrogen metabolism; urea degradation; CO(2) and NH(3) from urea (urease route): step 1/1. The protein is Urease subunit gamma of Synechocystis sp. (strain ATCC 27184 / PCC 6803 / Kazusa).